The chain runs to 190 residues: MTPVAAASPDYARRINIVQGEHRVEHDPEAVLCTILGSCVAACLWDPGASVGGMNHFLLPGDAHAQAGGGGAAMRYGAYAMELLINDLLRHGARRDRLKAKLFGGACLMKGLTDIGRLNADFAERFLAAEGIEIVGGSLRGERGRRIQFWPVSGRARQTLLAADQPALLRAEPDLRTLRAPPPSGAVELF.

The protein belongs to the CheD family.

It carries out the reaction L-glutaminyl-[protein] + H2O = L-glutamyl-[protein] + NH4(+). Functionally, probably deamidates glutamine residues to glutamate on methyl-accepting chemotaxis receptors (MCPs), playing an important role in chemotaxis. The sequence is that of Probable chemoreceptor glutamine deamidase CheD from Acidiphilium cryptum (strain JF-5).